Consider the following 219-residue polypeptide: Leukocyte surface antigen CD53 (219 aa).

The Cytoplasmic portion of the chain corresponds to 1-11 (MGMSSLKLLKY). A helical transmembrane segment spans residues 12-32 (VLFFFNLLFWICGCCILGFGI). Residues 33 to 54 (YLLIHNNFGVLFHNLPSLTLGN) lie on the Extracellular side of the membrane. A helical transmembrane segment spans residues 55-69 (VFVIVGSIIMVVAFL). The Cytoplasmic segment spans residues 70 to 80 (GCMGSIKENKC). The helical transmembrane segment at 81–106 (LLMSFFILLLIILLAEVTLAILLFVY) threads the bilayer. At 107-181 (EQKLNEYVAK…AKARLWFHSN (75 aa)) the chain is on the extracellular side. N-linked (GlcNAc...) asparagine glycosylation is found at Asn129 and Asn148. A helical membrane pass occupies residues 182-206 (FLYIGIITICVCVIEVLGMSFALTL). At 207–219 (NCQIDKTSQTIGL) the chain is on the cytoplasmic side.

It belongs to the tetraspanin (TM4SF) family. As to quaternary structure, interacts with SCIMP. Interacts with CD45/PTPRC. Interacts with IL7R. Interacts with RBL2 and PPP2CA. B-cells, monocytes, macrophages, neutrophils, single (CD4 or CD8) positive thymocytes and peripheral T-cells.

Its subcellular location is the cell membrane. It is found in the cell junction. The protein localises to the membrane. It localises to the synapse. In terms of biological role, structural component of specialized membrane microdomains known as tetraspanin-enriched microdomains (TERMs), which act as platforms for receptor clustering and signaling. Participates thereby in diverse biological functions such as cell signal transduction, adhesion, migration and protein trafficking. Plays a role in the activation of monocytes and B-cells. Acts as an essential regulator of B-cell development by promoting interleukin-7 receptor/IL7R signaling. Also promotes, in B-cells, the BCR signaling by recruiting PKC to the plasma membrane in order to phosphorylate its substrates. Plays an essential role in B- and T-cells homing to lymph nodes by stabilizing L-selectin/SELL cell surface expression. Also mediates metabolic and inflammatory functions in hepatocytes and adipose tissue by promoting TNF-alpha and LPS signaling independent of the immune compartment. This chain is Leukocyte surface antigen CD53 (CD53), found in Homo sapiens (Human).